Consider the following 389-residue polypeptide: 5-hydroxytryptamine receptor 1B (389 aa).

Residues 1–27 (MEDAGTPCAPPPPAGSQTGAPPANLSS) form a disordered region. The Extracellular segment spans residues 1–45 (MEDAGTPCAPPPPAGSQTGAPPANLSSAPHNCSAEGYIYQDSIAL). The segment covering 15-27 (GSQTGAPPANLSS) has biased composition (polar residues). Residues N24 and N31 are each glycosylated (N-linked (GlcNAc...) asparagine). The chain crosses the membrane as a helical span at residues 46-71 (PWKVLLAILLALLTLATTLSNAFVIA). The Cytoplasmic segment spans residues 72–85 (TVYRTRKLHTPANY). A helical transmembrane segment spans residues 86-110 (LIASLAVTDLLVSILVMPISTMYAV). Over 111 to 118 (TGRWTLGQ) the chain is Extracellular. Residues 119-144 (VVCDLWLSSDITCCTASILHLCVIAL) traverse the membrane as a helical segment. C121 and C198 are oxidised to a cystine. Ergotamine is bound by residues D128 and T133. Residues 145–147 (DRY) carry the DRY motif; important for ligand-induced conformation changes and signaling motif. The Cytoplasmic portion of the chain corresponds to 145–164 (DRYWAITDAVEYSAKRTPKR). A helical membrane pass occupies residues 165 to 183 (AAVMIALVWVFSISISLPP). Residues 184–204 (FFWRQAKAEEEVSDCVVNTDH) lie on the Extracellular side of the membrane. V200 provides a ligand contact to ergotamine. A helical membrane pass occupies residues 205–228 (ILYTVYSTVGAFYFPTLLLIALYG). Residues 229–314 (RIYVEARSRI…AARERKATKT (86 aa)) lie on the Cytoplasmic side of the membrane. The segment covering 258-271 (DSPGSTSSVTSVNS) has biased composition (polar residues). Residues 258 to 281 (DSPGSTSSVTSVNSRAPDVPSESG) form a disordered region. A helical membrane pass occupies residues 315–336 (LGIILGAFIVCWLPFFIISLVM). Residues 337 to 346 (PICKDACWFH) lie on the Extracellular side of the membrane. Residues 347–369 (LAIFDFFTWLGYLNSLINPIIYT) form a helical membrane-spanning segment. An NPxxY motif; important for ligand-induced conformation changes and signaling motif is present at residues 364–368 (NPIIY). The Cytoplasmic portion of the chain corresponds to 370 to 389 (MSNEDFKQAFHKLIRFKCAS). Residue C387 is the site of S-palmitoyl cysteine attachment.

Belongs to the G-protein coupled receptor 1 family. As to quaternary structure, homodimer. Heterodimer with HTR1D. Post-translationally, phosphorylated. Desensitization of the receptor may be mediated by its phosphorylation. In terms of processing, palmitoylated.

The protein resides in the cell membrane. Its function is as follows. G-protein coupled receptor for 5-hydroxytryptamine (serotonin). Also functions as a receptor for ergot alkaloid derivatives, various anxiolytic and antidepressant drugs and other psychoactive substances, such as lysergic acid diethylamide (LSD). Ligand binding causes a conformation change that triggers signaling via guanine nucleotide-binding proteins (G proteins) and modulates the activity of downstream effectors, such as adenylate cyclase. HTR1B is coupled to G(i)/G(o) G alpha proteins and mediates inhibitory neurotransmission by inhibiting adenylate cyclase activity. Arrestin family members inhibit signaling via G proteins and mediate activation of alternative signaling pathways. Regulates the release of 5-hydroxytryptamine, dopamine and acetylcholine in the brain, and thereby affects neural activity, nociceptive processing, pain perception, mood and behavior. Besides, plays a role in vasoconstriction of cerebral arteries. The polypeptide is 5-hydroxytryptamine receptor 1B (HTR1B) (Vulpes vulpes (Red fox)).